Here is a 415-residue protein sequence, read N- to C-terminus: Serine hydroxymethyltransferase (415 aa).

(6S)-5,6,7,8-tetrahydrofolate contacts are provided by residues Leu-115 and 119–121; that span reads GHL. Lys-224 is subject to N6-(pyridoxal phosphate)lysine. (6S)-5,6,7,8-tetrahydrofolate is bound at residue 348-350; the sequence is SPF.

The protein belongs to the SHMT family. In terms of assembly, homodimer. It depends on pyridoxal 5'-phosphate as a cofactor.

It is found in the cytoplasm. It catalyses the reaction (6R)-5,10-methylene-5,6,7,8-tetrahydrofolate + glycine + H2O = (6S)-5,6,7,8-tetrahydrofolate + L-serine. The protein operates within one-carbon metabolism; tetrahydrofolate interconversion. It participates in amino-acid biosynthesis; glycine biosynthesis; glycine from L-serine: step 1/1. Catalyzes the reversible interconversion of serine and glycine with tetrahydrofolate (THF) serving as the one-carbon carrier. This reaction serves as the major source of one-carbon groups required for the biosynthesis of purines, thymidylate, methionine, and other important biomolecules. Also exhibits THF-independent aldolase activity toward beta-hydroxyamino acids, producing glycine and aldehydes, via a retro-aldol mechanism. The sequence is that of Serine hydroxymethyltransferase from Latilactobacillus sakei subsp. sakei (strain 23K) (Lactobacillus sakei subsp. sakei).